A 282-amino-acid polypeptide reads, in one-letter code: Bifunctional protein FolD (282 aa).

NADP(+) is bound by residues 165–167 and isoleucine 231; that span reads GAS.

The protein belongs to the tetrahydrofolate dehydrogenase/cyclohydrolase family. As to quaternary structure, homodimer.

The catalysed reaction is (6R)-5,10-methylene-5,6,7,8-tetrahydrofolate + NADP(+) = (6R)-5,10-methenyltetrahydrofolate + NADPH. It carries out the reaction (6R)-5,10-methenyltetrahydrofolate + H2O = (6R)-10-formyltetrahydrofolate + H(+). Its pathway is one-carbon metabolism; tetrahydrofolate interconversion. In terms of biological role, catalyzes the oxidation of 5,10-methylenetetrahydrofolate to 5,10-methenyltetrahydrofolate and then the hydrolysis of 5,10-methenyltetrahydrofolate to 10-formyltetrahydrofolate. The protein is Bifunctional protein FolD of Francisella tularensis subsp. mediasiatica (strain FSC147).